A 479-amino-acid polypeptide reads, in one-letter code: Ribulose bisphosphate carboxylase large chain (479 aa).

The propeptide occupies 1-2 (MS). 2 residues coordinate substrate: Asn-123 and Thr-173. Residue Lys-175 is the Proton acceptor of the active site. Substrate is bound at residue Lys-177. Mg(2+)-binding residues include Lys-201, Asp-203, and Glu-204. Lys-201 carries the N6-carboxylysine modification. Ser-208 is modified (phosphoserine). The active-site Proton acceptor is His-294. Substrate contacts are provided by Arg-295 and His-327. Thr-330 bears the Phosphothreonine mark. Ser-379 serves as a coordination point for substrate.

The protein belongs to the RuBisCO large chain family. Type I subfamily. As to quaternary structure, heterohexadecamer of 8 large chains and 8 small chains; disulfide-linked. The disulfide link is formed within the large subunit homodimers. Requires Mg(2+) as cofactor. Post-translationally, the disulfide bond which can form in the large chain dimeric partners within the hexadecamer appears to be associated with oxidative stress and protein turnover.

It localises to the plastid. Its subcellular location is the chloroplast. The enzyme catalyses 2 (2R)-3-phosphoglycerate + 2 H(+) = D-ribulose 1,5-bisphosphate + CO2 + H2O. It catalyses the reaction D-ribulose 1,5-bisphosphate + O2 = 2-phosphoglycolate + (2R)-3-phosphoglycerate + 2 H(+). Its function is as follows. RuBisCO catalyzes two reactions: the carboxylation of D-ribulose 1,5-bisphosphate, the primary event in carbon dioxide fixation, as well as the oxidative fragmentation of the pentose substrate in the photorespiration process. Both reactions occur simultaneously and in competition at the same active site. This is Ribulose bisphosphate carboxylase large chain from Draba nemorosa (Woodland whitlowgrass).